The primary structure comprises 159 residues: Small ribosomal subunit protein bS16 (159 aa).

The span at 102-119 shows a compositional bias: low complexity; the sequence is GIPEAAEEAPATESVAEA. Residues 102-159 are disordered; sequence GIPEAAEEAPATESVAEAEVADVPESELSEAATETAAAELSPPEAEVEKPQVEEAVEA. The segment covering 120–129 has biased composition (acidic residues); it reads EVADVPESEL. Positions 130–145 are enriched in low complexity; sequence SEAATETAAAELSPPE.

This sequence belongs to the bacterial ribosomal protein bS16 family.

In Synechococcus sp. (strain JA-2-3B'a(2-13)) (Cyanobacteria bacterium Yellowstone B-Prime), this protein is Small ribosomal subunit protein bS16.